The primary structure comprises 98 residues: Cell division topological specificity factor (98 aa).

It belongs to the MinE family.

Its function is as follows. Prevents the cell division inhibition by proteins MinC and MinD at internal division sites while permitting inhibition at polar sites. This ensures cell division at the proper site by restricting the formation of a division septum at the midpoint of the long axis of the cell. The polypeptide is Cell division topological specificity factor (Nitrosomonas europaea (strain ATCC 19718 / CIP 103999 / KCTC 2705 / NBRC 14298)).